The following is a 190-amino-acid chain: Peptidyl-tRNA hydrolase (190 aa).

Tyr14 is a binding site for tRNA. Catalysis depends on His19, which acts as the Proton acceptor. 3 residues coordinate tRNA: Tyr63, Asn65, and Asn112.

Belongs to the PTH family. As to quaternary structure, monomer.

The protein localises to the cytoplasm. The catalysed reaction is an N-acyl-L-alpha-aminoacyl-tRNA + H2O = an N-acyl-L-amino acid + a tRNA + H(+). Its function is as follows. Hydrolyzes ribosome-free peptidyl-tRNAs (with 1 or more amino acids incorporated), which drop off the ribosome during protein synthesis, or as a result of ribosome stalling. In terms of biological role, catalyzes the release of premature peptidyl moieties from peptidyl-tRNA molecules trapped in stalled 50S ribosomal subunits, and thus maintains levels of free tRNAs and 50S ribosomes. The sequence is that of Peptidyl-tRNA hydrolase from Kosmotoga olearia (strain ATCC BAA-1733 / DSM 21960 / TBF 19.5.1).